The primary structure comprises 587 residues: 5-aminolevulinate synthase, erythroid-specific, mitochondrial (587 aa).

The N-terminal 49 residues, 1 to 49 (MVTAAMLLQRCPVLIRSPTGLLGKMIKTHQFLFGIGRCPILATQGPSFS), are a transit peptide targeting the mitochondrion. Arg163 is a binding site for succinyl-CoA. 2 residues coordinate pyridoxal 5'-phosphate: Cys258 and Phe259. Succinyl-CoA is bound by residues Ser280 and Lys299. Ser332, His360, and Thr388 together coordinate pyridoxal 5'-phosphate. The active site involves Lys391. The residue at position 391 (Lys391) is an N6-(pyridoxal phosphate)lysine. Positions 420 and 421 each coordinate pyridoxal 5'-phosphate. Thr508 lines the succinyl-CoA pocket.

The protein belongs to the class-II pyridoxal-phosphate-dependent aminotransferase family. In terms of assembly, homodimer. Interacts with SUCLA2. The cofactor is pyridoxal 5'-phosphate.

It localises to the mitochondrion inner membrane. The enzyme catalyses succinyl-CoA + glycine + H(+) = 5-aminolevulinate + CO2 + CoA. It participates in porphyrin-containing compound metabolism; protoporphyrin-IX biosynthesis; 5-aminolevulinate from glycine: step 1/1. Functionally, catalyzes the pyridoxal 5'-phosphate (PLP)-dependent condensation of succinyl-CoA and glycine to form aminolevulinic acid (ALA), with CoA and CO2 as by-products. Contributes significantly to heme formation during erythropoiesis. This Bos taurus (Bovine) protein is 5-aminolevulinate synthase, erythroid-specific, mitochondrial (ALAS2).